The following is a 382-amino-acid chain: MSLNIFWFLPTHGDGKYLGTSDGARAVDHGYLQQIAQAADRLGFGGVLIPTGRSCEDSWLVAASLIPVTQHLKFLVALRPGIISPTVAARQAATLDRLSNGRALFNLVTGGDPDELAGDGLHLNHQERYEASVEFTRIWRKVLEGENVDYDGKHIQVKGAKLLYPPIQQPRPPLYFGGSSEAAQDLAAEQVELYLTWGEPPAAVAEKIAQVREKAAAQGREVRFGIRLHVIVRETNEEAWAAADRLISHLDDETIARAQASLARFDSVGQQRMAALHGGNRDNLEVSPNLWAGVGLVRGGAGTALVGDGPTVAARVKEYADLGIDTFIFSGYPHLEESYRVAELLFPHLDVQRPEQPKTRGYVSPFGEMVANDILPKSVSQS.

The protein belongs to the SsuD family. Homotetramer.

It carries out the reaction an alkanesulfonate + FMNH2 + O2 = an aldehyde + FMN + sulfite + H2O + 2 H(+). Catalyzes the desulfonation of aliphatic sulfonates. The protein is Alkanesulfonate monooxygenase of Buttiauxella sp. (strain PNBS).